The chain runs to 650 residues: Threonine--tRNA ligase (650 aa).

Positions 1–61 (MIKITFPDGA…DEDGTLEIVM (61 aa)) constitute a TGS domain. The segment at 242-540 (DHRKLGKELD…LIETYKGAFP (299 aa)) is catalytic. Residues Cys336, His387, and His517 each contribute to the Zn(2+) site.

The protein belongs to the class-II aminoacyl-tRNA synthetase family. Homodimer. The cofactor is Zn(2+).

Its subcellular location is the cytoplasm. It catalyses the reaction tRNA(Thr) + L-threonine + ATP = L-threonyl-tRNA(Thr) + AMP + diphosphate + H(+). Catalyzes the attachment of threonine to tRNA(Thr) in a two-step reaction: L-threonine is first activated by ATP to form Thr-AMP and then transferred to the acceptor end of tRNA(Thr). Also edits incorrectly charged L-seryl-tRNA(Thr). The protein is Threonine--tRNA ligase of Streptococcus suis (strain 98HAH33).